The following is a 154-amino-acid chain: Transcriptional repressor NrdR (154 aa).

The segment at 3 to 34 (CPFCRHPDSRVIDSRETDEGQAIRRRRSCPEC) is a zinc-finger region. The region spanning 46 to 136 (LAVVKRSGVT…VYRSFESADD (91 aa)) is the ATP-cone domain.

The protein belongs to the NrdR family. Requires Zn(2+) as cofactor.

In terms of biological role, negatively regulates transcription of bacterial ribonucleotide reductase nrd genes and operons by binding to NrdR-boxes. The chain is Transcriptional repressor NrdR from Mycobacterium avium (strain 104).